Consider the following 209-residue polypeptide: Large ribosomal subunit protein uL3 (209 aa).

The disordered stretch occupies residues 126–148; sequence HGQSRGPMAHGSRYHRRPGSMGP.

It belongs to the universal ribosomal protein uL3 family. Part of the 50S ribosomal subunit. Forms a cluster with proteins L14 and L19.

One of the primary rRNA binding proteins, it binds directly near the 3'-end of the 23S rRNA, where it nucleates assembly of the 50S subunit. This Listeria innocua serovar 6a (strain ATCC BAA-680 / CLIP 11262) protein is Large ribosomal subunit protein uL3.